We begin with the raw amino-acid sequence, 357 residues long: Probable cinnamyl alcohol dehydrogenase 2 (357 aa).

Cys47 contributes to the Zn(2+) binding site. An NADP(+)-binding site is contributed by Ser49. Zn(2+) contacts are provided by His69, Glu70, Cys100, Cys103, Cys106, Cys114, and Cys163. NADP(+) is bound by residues Thr167, 188–193 (GLGGVG), 211–216 (SSSDKK), Thr251, Gly275, and 298–300 (SFI).

The protein belongs to the zinc-containing alcohol dehydrogenase family. As to quaternary structure, homodimer. Zn(2+) serves as cofactor.

The catalysed reaction is (E)-cinnamyl alcohol + NADP(+) = (E)-cinnamaldehyde + NADPH + H(+). It carries out the reaction (E)-coniferol + NADP(+) = (E)-coniferaldehyde + NADPH + H(+). It catalyses the reaction (E)-sinapyl alcohol + NADP(+) = (E)-sinapaldehyde + NADPH + H(+). The enzyme catalyses (E)-4-coumaroyl alcohol + NADP(+) = (E)-4-coumaraldehyde + NADPH + H(+). The catalysed reaction is (E)-caffeyl alcohol + NADP(+) = (E)-caffeyl aldehyde + NADPH + H(+). The protein operates within aromatic compound metabolism; phenylpropanoid biosynthesis. In terms of biological role, involved in lignin biosynthesis. Catalyzes the final step specific for the production of lignin monomers. Catalyzes the NADPH-dependent reduction of coniferaldehyde, 5-hydroxyconiferaldehyde, sinapaldehyde, 4-coumaraldehyde and caffeyl aldehyde to their respective alcohols. This chain is Probable cinnamyl alcohol dehydrogenase 2 (CAD2), found in Picea abies (Norway spruce).